Here is a 418-residue protein sequence, read N- to C-terminus: MTIAEKIRKIAADARQASLAMARLSSAAKNELLMNMAMALINNTPHLVEENAKDLSAGEKKGLSAAMLDRLMLDEARIKAMADGLREVVGLPDPVGEVTRMWKRPNELTVGKMRIPLGVIGIIYESRPNVTADAAALCLKAGNAVVLRGGSEAIYSNVAIARILQDEMRKDGIPVAALSVIPFVEREGVTEMLKQEEFIDVIIPRGGESLIRFVVEHSKIPVIKHYKGVCHVFVDASADFDMAERIIVNSKTQRPGVCNALETLLIHKDVAETFIPRIFETLAALKVEMRGDDCFRQFAPGATPATEEDWHAEYLDLILAARVVDDMDEAIAHINKYGSLHTEAIITSDYGNSQRFLREVNSSVVLVNASTRFSDGNQLGLGAEIGISTTKLHSFGPMGLEDLTTTKFIVYGEGQVRP.

It belongs to the gamma-glutamyl phosphate reductase family.

It localises to the cytoplasm. The enzyme catalyses L-glutamate 5-semialdehyde + phosphate + NADP(+) = L-glutamyl 5-phosphate + NADPH + H(+). It functions in the pathway amino-acid biosynthesis; L-proline biosynthesis; L-glutamate 5-semialdehyde from L-glutamate: step 2/2. Functionally, catalyzes the NADPH-dependent reduction of L-glutamate 5-phosphate into L-glutamate 5-semialdehyde and phosphate. The product spontaneously undergoes cyclization to form 1-pyrroline-5-carboxylate. This Geotalea uraniireducens (strain Rf4) (Geobacter uraniireducens) protein is Gamma-glutamyl phosphate reductase.